We begin with the raw amino-acid sequence, 504 residues long: Glycerol kinase (504 aa).

ADP is bound at residue Thr-12. Thr-12, Thr-13, and Ser-14 together coordinate ATP. A sn-glycerol 3-phosphate-binding site is contributed by Thr-12. Position 16 (Arg-16) interacts with ADP. Residues Arg-82, Glu-83, Tyr-134, and Asp-244 each contribute to the sn-glycerol 3-phosphate site. Positions 82, 83, 134, 244, and 245 each coordinate glycerol. Residues Thr-266 and Gly-309 each contribute to the ADP site. ATP-binding residues include Thr-266, Gly-309, Gln-313, and Gly-410. ADP-binding residues include Gly-410 and Asn-414.

The protein belongs to the FGGY kinase family. Homotetramer and homodimer (in equilibrium).

The catalysed reaction is glycerol + ATP = sn-glycerol 3-phosphate + ADP + H(+). It functions in the pathway polyol metabolism; glycerol degradation via glycerol kinase pathway; sn-glycerol 3-phosphate from glycerol: step 1/1. With respect to regulation, activated by phosphorylation and inhibited by fructose 1,6-bisphosphate (FBP). In terms of biological role, key enzyme in the regulation of glycerol uptake and metabolism. Catalyzes the phosphorylation of glycerol to yield sn-glycerol 3-phosphate. The chain is Glycerol kinase from Alkaliphilus oremlandii (strain OhILAs) (Clostridium oremlandii (strain OhILAs)).